The sequence spans 634 residues: Sodium-dependent multivitamin transporter (634 aa).

A run of 12 helical transmembrane segments spans residues 23–43 (FSVVDYVVFGLLLVLSLVIGL), 65–85 (MGCLPVALSLLATFQSAVAIL), 100–120 (FLGCSYFLGLLIPAHIFIPVF), 142–162 (ICGTVTFIFQMVVYMGVALYA), 175–195 (LWLSVLALGIVCNIYTALGGL), 207–227 (LIMFLGQLVVIIVGAAKVGGL), 255–275 (FWTLAFGGVFMMLSLYGVNQA), 295–315 (AVFPCQQVALCMSCLIGLVMF), 350–370 (LPGLFVACLFSGSLSTISSAF), 403–423 (FAYGLVCLGMAYVSSHLGSVL), 427–447 (LSIFGMVGGPLLGLFCLGMFF), and 455–475 (AIVGLLTGLTMAFWIGIGSIV). N488 and N497 each carry an N-linked (GlcNAc...) asparagine glycan. Residues 526–546 (LWYSAHNSTTVIAVGLIVSLL) form a helical membrane-spanning segment.

The protein belongs to the sodium:solute symporter (SSF) (TC 2.A.21) family. Interacts with PDZD11. Expressed in the jejunum (at protein level). Expressed in lung, skeletal muscle, heart, brain, kidney, intestine, liver, and placenta.

The protein localises to the cell membrane. It localises to the apical cell membrane. The catalysed reaction is biotin(out) + 2 Na(+)(out) = biotin(in) + 2 Na(+)(in). It carries out the reaction (R)-pantothenate(out) + 2 Na(+)(out) = (R)-pantothenate(in) + 2 Na(+)(in). It catalyses the reaction (R)-lipoate(out) + 2 Na(+)(out) = (R)-lipoate(in) + 2 Na(+)(in). The enzyme catalyses iodide(out) + 2 Na(+)(out) = iodide(in) + 2 Na(+)(in). Its function is as follows. Sodium-dependent multivitamin transporter that mediates the electrogenic transport of pantothenate, biotin, lipoate and iodide. Functions as a Na(+)-coupled substrate symporter where the stoichiometry of Na(+):substrate is 2:1, creating an electrochemical Na(+) gradient used as driving force for substrate uptake. Required for biotin and pantothenate uptake in the intestine across the brush border membrane. Plays a role in the maintenance of intestinal mucosa integrity, by providing the gut mucosa with biotin. Contributes to the luminal uptake of biotin and pantothenate into the brain across the blood-brain barrier. This is Sodium-dependent multivitamin transporter from Rattus norvegicus (Rat).